A 156-amino-acid polypeptide reads, in one-letter code: Cyclic pyranopterin monophosphate synthase (156 aa).

Residues Leu-75–His-77 and Met-111–Glu-112 each bind substrate. Asp-126 is an active-site residue.

This sequence belongs to the MoaC family. In terms of assembly, homohexamer; trimer of dimers.

It carries out the reaction (8S)-3',8-cyclo-7,8-dihydroguanosine 5'-triphosphate = cyclic pyranopterin phosphate + diphosphate. The protein operates within cofactor biosynthesis; molybdopterin biosynthesis. In terms of biological role, catalyzes the conversion of (8S)-3',8-cyclo-7,8-dihydroguanosine 5'-triphosphate to cyclic pyranopterin monophosphate (cPMP). The sequence is that of Cyclic pyranopterin monophosphate synthase from Corynebacterium glutamicum (strain R).